The following is a 379-amino-acid chain: Succinyl-diaminopimelate desuccinylase (379 aa).

His70 contributes to the Zn(2+) binding site. Asp72 is an active-site residue. Zn(2+) is bound at residue Asp103. The active-site Proton acceptor is the Glu137. Zn(2+) contacts are provided by Glu138, Glu166, and His352.

Belongs to the peptidase M20A family. DapE subfamily. In terms of assembly, homodimer. Requires Zn(2+) as cofactor. It depends on Co(2+) as a cofactor.

It carries out the reaction N-succinyl-(2S,6S)-2,6-diaminopimelate + H2O = (2S,6S)-2,6-diaminopimelate + succinate. Its pathway is amino-acid biosynthesis; L-lysine biosynthesis via DAP pathway; LL-2,6-diaminopimelate from (S)-tetrahydrodipicolinate (succinylase route): step 3/3. In terms of biological role, catalyzes the hydrolysis of N-succinyl-L,L-diaminopimelic acid (SDAP), forming succinate and LL-2,6-diaminopimelate (DAP), an intermediate involved in the bacterial biosynthesis of lysine and meso-diaminopimelic acid, an essential component of bacterial cell walls. In Burkholderia pseudomallei (strain 1106a), this protein is Succinyl-diaminopimelate desuccinylase.